The sequence spans 207 residues: Peptidyl-tRNA hydrolase (207 aa).

Residue tyrosine 15 participates in tRNA binding. Catalysis depends on histidine 20, which acts as the Proton acceptor. Phenylalanine 66, asparagine 68, and asparagine 114 together coordinate tRNA. The tract at residues 187 to 207 (HTTKPPRPKPARPATAESDKG) is disordered. A compositionally biased stretch (low complexity) spans 198–207 (RPATAESDKG).

This sequence belongs to the PTH family. In terms of assembly, monomer.

The protein resides in the cytoplasm. The catalysed reaction is an N-acyl-L-alpha-aminoacyl-tRNA + H2O = an N-acyl-L-amino acid + a tRNA + H(+). In terms of biological role, hydrolyzes ribosome-free peptidyl-tRNAs (with 1 or more amino acids incorporated), which drop off the ribosome during protein synthesis, or as a result of ribosome stalling. Functionally, catalyzes the release of premature peptidyl moieties from peptidyl-tRNA molecules trapped in stalled 50S ribosomal subunits, and thus maintains levels of free tRNAs and 50S ribosomes. The polypeptide is Peptidyl-tRNA hydrolase (Delftia acidovorans (strain DSM 14801 / SPH-1)).